The chain runs to 652 residues: Putative glycine--tRNA ligase (652 aa).

Residues 119–145 are disordered; it reads GDKEARGQNSNDQPEESDDKKKRKKKV. Glu221 is a glycine binding site. Residues 253-255 and 264-265 each bind ATP; these read RNE and RV. Glu272 is a glycine binding site. Position 380-381 (380-381) interacts with ATP; that stretch reads EC. 499–501 serves as a coordination point for glycine; the sequence is EPS. Arg506 provides a ligand contact to ATP.

The protein belongs to the class-II aminoacyl-tRNA synthetase family. Homodimer.

The protein resides in the cytoplasm. It catalyses the reaction tRNA(Gly) + glycine + ATP = glycyl-tRNA(Gly) + AMP + diphosphate. The catalysed reaction is 2 ATP + H(+) = P(1),P(4)-bis(5'-adenosyl) tetraphosphate + diphosphate. Functionally, catalyzes the ATP-dependent ligation of glycine to the 3'-end of its cognate tRNA, via the formation of an aminoacyl-adenylate intermediate (Gly-AMP). Also produces diadenosine tetraphosphate (Ap4A), a universal pleiotropic signaling molecule needed for cell regulation pathways, by direct condensation of 2 ATPs. Thereby, may play a special role in Ap4A homeostasis. The sequence is that of Putative glycine--tRNA ligase (grs1) from Schizosaccharomyces pombe (strain 972 / ATCC 24843) (Fission yeast).